The following is a 399-amino-acid chain: Acetate kinase (399 aa).

Asn-10 serves as a coordination point for Mg(2+). Lys-17 contacts ATP. Residue Arg-91 coordinates substrate. Asp-148 acts as the Proton donor/acceptor in catalysis. Residues 208-212 (HLGNG), 283-285 (DCR), and 331-335 (GIGEN) contribute to the ATP site. Glu-385 is a Mg(2+) binding site.

It belongs to the acetokinase family. As to quaternary structure, homodimer. Mg(2+) is required as a cofactor. Requires Mn(2+) as cofactor.

It localises to the cytoplasm. The enzyme catalyses acetate + ATP = acetyl phosphate + ADP. It functions in the pathway metabolic intermediate biosynthesis; acetyl-CoA biosynthesis; acetyl-CoA from acetate: step 1/2. In terms of biological role, catalyzes the formation of acetyl phosphate from acetate and ATP. Can also catalyze the reverse reaction. This chain is Acetate kinase, found in Shewanella sp. (strain ANA-3).